A 194-amino-acid polypeptide reads, in one-letter code: Factor in the germline alpha (194 aa).

Positions 59–111 (ERRRVANAKERERIKNLNRGFAKLKALVPFLPQSRKPSKVDILKGATEYIQIL) constitute a bHLH domain. Residues 121 to 137 (SEKQSPEEQTHSGRPSD) are compositionally biased toward basic and acidic residues. The disordered stretch occupies residues 121-163 (SEKQSPEEQTHSGRPSDPHVSSTRELLGNATQPTSCASGLKKE). A compositionally biased stretch (polar residues) spans 139 to 157 (HVSSTRELLGNATQPTSCA).

Heterodimer with TCF3/isoform E12. As to expression, expressed only in the oocytes within the ovary and at lower level in the testis. Found in the resting oocytes of the primordial follicle cells, at the periphery of the ovary and in the hilar region. Also detected in growing oocytes, but at lower levels.

It localises to the nucleus. Its function is as follows. Germ-line specific transcription factor implicated in postnatal oocyte-specific gene expression. Plays a key regulatory role in the expression of multiple oocyte-specific genes, including those that initiate folliculogenesis and those that encode the zona pellucida (ZP1, ZP2 and ZP3) required for fertilization and early embryonic survival. Essential for oocytes to survive and form primordial follicles. The persistence of FIGLA in adult females suggests that it may regulate additional pathways that are essential for normal ovarian development. Binds to the E-box (5'-CANNTG-3') of the ZPs (ZP1, ZP2, ZP3) promoters. This is Factor in the germline alpha (Figla) from Mus musculus (Mouse).